The primary structure comprises 123 residues: UPF0102 protein CLD_2200 (123 aa).

It belongs to the UPF0102 family.

This Clostridium botulinum (strain Okra / Type B1) protein is UPF0102 protein CLD_2200.